The following is a 254-amino-acid chain: DNA repair protein RecO (254 aa).

The protein belongs to the RecO family.

In terms of biological role, involved in DNA repair and RecF pathway recombination. The polypeptide is DNA repair protein RecO (Rhodopseudomonas palustris (strain BisB18)).